Here is a 216-residue protein sequence, read N- to C-terminus: Uridine kinase (216 aa).

16–23 (GASASGKS) is a binding site for ATP.

Belongs to the uridine kinase family.

Its subcellular location is the cytoplasm. It carries out the reaction uridine + ATP = UMP + ADP + H(+). It catalyses the reaction cytidine + ATP = CMP + ADP + H(+). Its pathway is pyrimidine metabolism; CTP biosynthesis via salvage pathway; CTP from cytidine: step 1/3. The protein operates within pyrimidine metabolism; UMP biosynthesis via salvage pathway; UMP from uridine: step 1/1. The polypeptide is Uridine kinase (Pasteurella multocida (strain Pm70)).